The following is a 238-amino-acid chain: Tetraspanin-8 (238 aa).

Over 1-9 the chain is Cytoplasmic; sequence MAGVNVCIK. Residues 10-33 traverse the membrane as a helical segment; that stretch reads CSMFIFNFVFWLCGAIILSVAISI. The Extracellular segment spans residues 34-57; that stretch reads RAGKIGQEILAPGDADLNLFIAVN. The chain crosses the membrane as a helical span at residues 58–72; the sequence is ILIFVGAVIMILGFL. The Cytoplasmic segment spans residues 73-83; sequence GCCGAMKENQF. The chain crosses the membrane as a helical span at residues 84 to 109; the sequence is MMILFFVGLLMILLLQVAAGIVATTR. Residues 110 to 206 lie on the Extracellular side of the membrane; sequence KSKTEQALNK…ASISQMFSKR (97 aa). Asn118 carries an N-linked (GlcNAc...) asparagine glycan. The helical transmembrane segment at 207–231 threads the bilayer; the sequence is LFIVLALAFGLAAIEVLGLIFSIVL. Over 232–238 the chain is Cytoplasmic; it reads YCQMRKK.

This sequence belongs to the tetraspanin (TM4SF) family. As to quaternary structure, forms homooligomers. Interacts with MEP1B. Interacts with integrin alpha3/ITGA3. Interacts with RICTOR and MTOR. Interacts with ADAM17. Interacts with ECE1.

The protein resides in the cell membrane. In terms of biological role, structural component of specialized membrane microdomains known as tetraspanin-enriched microdomains (TERMs), which act as platforms for receptor clustering and signaling. Participates thereby in diverse biological functions such as cell signal transduction, migration and protein trafficking. Promotes ADAM17-mediated TNF-alpha processing through recruitment of ADAM17 to tetraspanin-enriched micro-domains (TEMs). Forms a complex with RICTOR and integrin alpha3/ITGA3 to mediate mTORC2 activation and AKT1 phosphorylation leading to cell migration. Reduces apoptosis and autophagy induced by high glucose levels through forming a complex with mTOR and RICTOR. Contributes to the maintenance of intestinal epithelial barrier and plays a role in the regulation of intestine inflammation by switching interferon gamma receptor 1/IFNGR1 from clathrin-dependent to lipid raft-dependent endocytosis route to limit STAT1 activation magnitude and duration. Acts as a modulator of the endothelin axis by associating with endothelin converting enzyme ECE1 and regulating its activity of conversion of the endothelin-1 precursor to endothelin. This chain is Tetraspanin-8 (TSPAN8), found in Bos taurus (Bovine).